The following is a 219-amino-acid chain: GTP cyclohydrolase 1 (219 aa).

Residues 1–37 form a disordered region; that stretch reads MDAVLKSLSVRLPDAADKRSDTGRPERVTERPTRQEA. The span at 14 to 37 shows a compositional bias: basic and acidic residues; that stretch reads DAADKRSDTGRPERVTERPTRQEA. Residues Cys-108, His-111, and Cys-179 each contribute to the Zn(2+) site.

It belongs to the GTP cyclohydrolase I family. As to quaternary structure, homomer.

The catalysed reaction is GTP + H2O = 7,8-dihydroneopterin 3'-triphosphate + formate + H(+). It functions in the pathway cofactor biosynthesis; 7,8-dihydroneopterin triphosphate biosynthesis; 7,8-dihydroneopterin triphosphate from GTP: step 1/1. This chain is GTP cyclohydrolase 1, found in Methylobacterium sp. (strain 4-46).